We begin with the raw amino-acid sequence, 468 residues long: MARALEQADGRWAWVVLLSSLVTQALTLGFPTCIGVFFTDLQRDFQASNSETSWFPSILGAMVHGGGPLCSILVKHFGCRVTMMLGGVLASLGMVVSTFSGSLTHLFLTAGVITGLGMCFSFQSSITVVGLYFVRRRPLANALASMGLSMGVTLWPLLARYLLETLGWRGAFLIFGGILLHCCVCGALLRPVATNEVPEPKEDPLLPPKIPTRSCLATCVSTIRYHLAFDILRHNMGFCIYVTGVTWMNLGFALPHIFLVPYAMHHGVDDYWAAMLMSIVGFCNIFLRPMAGLLLAGRKSLAAYRKYLFAVAILINGLTNLICTVSADFRVLLGYCLVYSLSMCGVGILVFQVLMDIVPMDRFPSALGLFTILCGVTSLISPPLAGLLLDKTNNFSYVFYMSSGFLVSGSLILGVGFYAAEKKKLKQDGQAKMENATSEMTPMHDLTSEDKDSAKKQPYPESIYMTNV.

Over 1–13 (MARALEQADGRWA) the chain is Cytoplasmic. Residues 14–34 (WVVLLSSLVTQALTLGFPTCI) traverse the membrane as a helical segment. The Extracellular segment spans residues 35-53 (GVFFTDLQRDFQASNSETS). The helical transmembrane segment at 54–74 (WFPSILGAMVHGGGPLCSILV) threads the bilayer. The Cytoplasmic segment spans residues 75-80 (KHFGCR). A helical transmembrane segment spans residues 81–101 (VTMMLGGVLASLGMVVSTFSG). Position 102 (serine 102) is a topological domain, extracellular. A helical membrane pass occupies residues 103-122 (LTHLFLTAGVITGLGMCFSF). Topologically, residues 123-138 (QSSITVVGLYFVRRRP) are cytoplasmic. A helical membrane pass occupies residues 139–159 (LANALASMGLSMGVTLWPLLA). The Extracellular portion of the chain corresponds to 160–171 (RYLLETLGWRGA). Residues 172–192 (FLIFGGILLHCCVCGALLRPV) form a helical membrane-spanning segment. Over 193 to 239 (ATNEVPEPKEDPLLPPKIPTRSCLATCVSTIRYHLAFDILRHNMGFC) the chain is Cytoplasmic. A helical transmembrane segment spans residues 240–260 (IYVTGVTWMNLGFALPHIFLV). Over 261–274 (PYAMHHGVDDYWAA) the chain is Extracellular. Residues 275–295 (MLMSIVGFCNIFLRPMAGLLL) form a helical membrane-spanning segment. Residues 296-306 (AGRKSLAAYRK) are Cytoplasmic-facing. The helical transmembrane segment at 307–327 (YLFAVAILINGLTNLICTVSA) threads the bilayer. Residues 328-330 (DFR) are Extracellular-facing. A helical membrane pass occupies residues 331–351 (VLLGYCLVYSLSMCGVGILVF). Residues 352-368 (QVLMDIVPMDRFPSALG) are Cytoplasmic-facing. The helical transmembrane segment at 369–389 (LFTILCGVTSLISPPLAGLLL) threads the bilayer. Over 390–396 (DKTNNFS) the chain is Extracellular. The chain crosses the membrane as a helical span at residues 397–417 (YVFYMSSGFLVSGSLILGVGF). Residues 418–468 (YAAEKKKLKQDGQAKMENATSEMTPMHDLTSEDKDSAKKQPYPESIYMTNV) lie on the Cytoplasmic side of the membrane. The interval 429 to 468 (GQAKMENATSEMTPMHDLTSEDKDSAKKQPYPESIYMTNV) is disordered. The span at 446-455 (LTSEDKDSAK) shows a compositional bias: basic and acidic residues.

Belongs to the major facilitator superfamily. Monocarboxylate porter (TC 2.A.1.13) family.

It is found in the cell membrane. In terms of biological role, proton-linked monocarboxylate transporter. Catalyzes the rapid transport across the plasma membrane of many monocarboxylates such as lactate, pyruvate, branched-chain oxo acids derived from leucine, valine and isoleucine, and the ketone bodies acetoacetate, beta-hydroxybutyrate and acetate. The sequence is that of Monocarboxylate transporter 6 (Slc16a5) from Mus musculus (Mouse).